The chain runs to 282 residues: Bis(5'-nucleosyl)-tetraphosphatase, symmetrical (282 aa).

It belongs to the Ap4A hydrolase family.

It catalyses the reaction P(1),P(4)-bis(5'-adenosyl) tetraphosphate + H2O = 2 ADP + 2 H(+). Hydrolyzes diadenosine 5',5'''-P1,P4-tetraphosphate to yield ADP. The chain is Bis(5'-nucleosyl)-tetraphosphatase, symmetrical from Escherichia coli O81 (strain ED1a).